A 118-amino-acid polypeptide reads, in one-letter code: UPF0102 protein ROP_66030 (118 aa).

Belongs to the UPF0102 family.

This is UPF0102 protein ROP_66030 from Rhodococcus opacus (strain B4).